A 252-amino-acid chain; its full sequence is Urease accessory protein UreD (252 aa).

Belongs to the UreD family. UreD, UreF and UreG form a complex that acts as a GTP-hydrolysis-dependent molecular chaperone, activating the urease apoprotein by helping to assemble the nickel containing metallocenter of UreC. The UreE protein probably delivers the nickel.

It localises to the cytoplasm. Its function is as follows. Required for maturation of urease via the functional incorporation of the urease nickel metallocenter. The sequence is that of Urease accessory protein UreD from Streptomyces avermitilis (strain ATCC 31267 / DSM 46492 / JCM 5070 / NBRC 14893 / NCIMB 12804 / NRRL 8165 / MA-4680).